A 427-amino-acid polypeptide reads, in one-letter code: Serine hydroxymethyltransferase (427 aa).

(6S)-5,6,7,8-tetrahydrofolate contacts are provided by residues Leu122 and 126–128 (GHL). Lys231 is subject to N6-(pyridoxal phosphate)lysine. 355 to 357 (SPF) provides a ligand contact to (6S)-5,6,7,8-tetrahydrofolate.

This sequence belongs to the SHMT family. As to quaternary structure, homodimer. It depends on pyridoxal 5'-phosphate as a cofactor.

It is found in the cytoplasm. It catalyses the reaction (6R)-5,10-methylene-5,6,7,8-tetrahydrofolate + glycine + H2O = (6S)-5,6,7,8-tetrahydrofolate + L-serine. It functions in the pathway one-carbon metabolism; tetrahydrofolate interconversion. The protein operates within amino-acid biosynthesis; glycine biosynthesis; glycine from L-serine: step 1/1. In terms of biological role, catalyzes the reversible interconversion of serine and glycine with tetrahydrofolate (THF) serving as the one-carbon carrier. This reaction serves as the major source of one-carbon groups required for the biosynthesis of purines, thymidylate, methionine, and other important biomolecules. Also exhibits THF-independent aldolase activity toward beta-hydroxyamino acids, producing glycine and aldehydes, via a retro-aldol mechanism. This chain is Serine hydroxymethyltransferase, found in Nostoc punctiforme (strain ATCC 29133 / PCC 73102).